We begin with the raw amino-acid sequence, 748 residues long: NAD(P)H-quinone oxidoreductase subunit 5, chloroplastic (748 aa).

Transmembrane regions (helical) follow at residues 9–29, 40–60, 89–109, 121–140, 147–167, 185–205, 224–244, 258–278, 280–300, 327–347, 354–374, 396–416, 425–445, 551–571, 605–625, and 726–746; these read WIIPFLPLPVPMLIGVGLLLV, WAFPSVLLLSIVMIFSADLSI, IDPLTSIMSILITTVGIMVLV, YLRFFAYMSFSNTSMLGLVT, IYIFWELVGMCSYLLIGFWFT, GDFGLLLGILGLYWITGSFEF, LFVTLCASLLFVGAVAKSAQF, TPISALIHAATMVAAGIFLVA, LFPLFTVIPYIMNLISLIGII, LGYTMLALGMGSYRAALFHLI, ALLFLGSGSIIHSMETVVGYS, TAFLLGTLSLCGIPPLACFWS, WLYSPIFAIIACSTAGLTAFY, LLPLLVLVLFTLFVGFIGIPF, FITNAIFSVSIAYFGIFIASL, and YLFLYLSYVLIFLLISYFLFL.

Belongs to the complex I subunit 5 family. As to quaternary structure, NDH is composed of at least 16 different subunits, 5 of which are encoded in the nucleus.

The protein resides in the plastid. It localises to the chloroplast thylakoid membrane. It carries out the reaction a plastoquinone + NADH + (n+1) H(+)(in) = a plastoquinol + NAD(+) + n H(+)(out). The catalysed reaction is a plastoquinone + NADPH + (n+1) H(+)(in) = a plastoquinol + NADP(+) + n H(+)(out). NDH shuttles electrons from NAD(P)H:plastoquinone, via FMN and iron-sulfur (Fe-S) centers, to quinones in the photosynthetic chain and possibly in a chloroplast respiratory chain. The immediate electron acceptor for the enzyme in this species is believed to be plastoquinone. Couples the redox reaction to proton translocation, and thus conserves the redox energy in a proton gradient. In Platanus occidentalis (Sycamore), this protein is NAD(P)H-quinone oxidoreductase subunit 5, chloroplastic (ndhF).